Reading from the N-terminus, the 254-residue chain is Proteasome activator complex subunit 3 (254 aa).

N6-acetyllysine occurs at positions 6 and 14. At Lys195 the chain carries N6-acetyllysine; by P300/CBP.

In terms of assembly, homoheptamer. In terms of processing, acetylation at the major site Lys-195 is important for oligomerization and ability to degrade its target substrates. Deacetylated by SIRT1.

Functionally, implicated in immunoproteasome assembly and required for efficient antigen processing. The PA28 activator complex enhances the generation of class I binding peptides by altering the cleavage pattern of the proteasome. This Gallus gallus (Chicken) protein is Proteasome activator complex subunit 3.